Reading from the N-terminus, the 621-residue chain is Exonuclease 3'-5' domain-containing protein 2 (621 aa).

Topologically, residues 1–4 (MSRQ) are mitochondrial intermembrane. Residues 5-25 (NLVALTVTTLLGVAVGGFVLW) traverse the membrane as a helical segment. Over 26–621 (KGIQRRRRSK…FGEDLPIQLS (596 aa)) the chain is Cytoplasmic. Positions 34-68 (SKTSPVTQQPQQKVLGSRELPPPEDDQLHSSAPRS) are disordered. The segment covering 36-47 (TSPVTQQPQQKV) has biased composition (polar residues). Positions 108, 110, and 246 each coordinate a divalent metal cation. Positions 155-247 (ILADGTILKV…DQVIYAARDA (93 aa)) constitute a 3'-5' exonuclease domain. The interval 299-343 (RLGEEVNGEATESQQKPRNKKSKMDGMVPGNHQGRDPRKHKRKPL) is disordered.

The protein belongs to the EXD2 family. In terms of assembly, homodimer. Interacts with RBBP8, MRE11 and BRCA1. The cofactor is Mg(2+). Mn(2+) serves as cofactor.

Its subcellular location is the mitochondrion outer membrane. It is found in the mitochondrion matrix. The protein resides in the nucleus. The protein localises to the chromosome. It carries out the reaction Exonucleolytic cleavage in the 3'- to 5'-direction to yield nucleoside 5'-phosphates.. Functionally, exonuclease that has both 3'-5' exoribonuclease and exodeoxyribonuclease activities, depending on the divalent metal cation used as cofactor. In presence of Mg(2+), only shows 3'-5' exoribonuclease activity, while it shows both exoribonuclease and exodeoxyribonuclease activities in presence of Mn(2+). Acts as an exoribonuclease in mitochondrion, possibly by regulating ATP production and mitochondrial translation. Also involved in the response to DNA damage. Acts as 3'-5' exodeoxyribonuclease for double-strand breaks resection and efficient homologous recombination. Plays a key role in controlling the initial steps of chromosomal break repair, it is recruited to chromatin in a damage-dependent manner and functionally interacts with the MRN complex to accelerate resection through its 3'-5' exonuclease activity, which efficiently processes double-stranded DNA substrates containing nicks. Also involved in response to replicative stress: recruited to stalled forks and is required to stabilize and restart stalled replication forks by restraining excessive fork regression, thereby suppressing their degradation. The chain is Exonuclease 3'-5' domain-containing protein 2 from Homo sapiens (Human).